The chain runs to 248 residues: Probable transcriptional regulatory protein AZC_0510 (248 aa).

The protein belongs to the TACO1 family.

The protein localises to the cytoplasm. This is Probable transcriptional regulatory protein AZC_0510 from Azorhizobium caulinodans (strain ATCC 43989 / DSM 5975 / JCM 20966 / LMG 6465 / NBRC 14845 / NCIMB 13405 / ORS 571).